Consider the following 266-residue polypeptide: Glutamate racemase (266 aa).

Substrate is bound by residues 9-10 (DS) and 41-42 (YG). Cys-72 functions as the Proton donor/acceptor in the catalytic mechanism. 73-74 (NT) is a binding site for substrate. Cys-183 serves as the catalytic Proton donor/acceptor. 184-185 (TH) serves as a coordination point for substrate.

It belongs to the aspartate/glutamate racemases family.

It carries out the reaction L-glutamate = D-glutamate. The protein operates within cell wall biogenesis; peptidoglycan biosynthesis. Functionally, provides the (R)-glutamate required for cell wall biosynthesis. The sequence is that of Glutamate racemase from Listeria monocytogenes serotype 4a (strain HCC23).